A 323-amino-acid polypeptide reads, in one-letter code: Cytochrome c biogenesis protein CcsA (323 aa).

The next 8 membrane-spanning stretches (helical) occupy residues 17–37, 44–64, 68–88, 98–118, 143–163, 229–249, 262–279, and 291–311; these read VVSI…IVGF, GMII…FFSG, FSDL…FYMV, LSTI…SGLL, MILG…ILVI, IISL…VWAN, ETWA…LHSR, and IVAS…NLLG.

The protein belongs to the CcmF/CycK/Ccl1/NrfE/CcsA family. In terms of assembly, may interact with Ccs1.

The protein resides in the plastid. It is found in the chloroplast thylakoid membrane. Its function is as follows. Required during biogenesis of c-type cytochromes (cytochrome c6 and cytochrome f) at the step of heme attachment. The protein is Cytochrome c biogenesis protein CcsA of Lotus japonicus (Lotus corniculatus var. japonicus).